The sequence spans 261 residues: Small ribosomal subunit protein uS2 (261 aa).

A disordered region spans residues 223 to 261 (EGKQGQDDSEDVEKEMADKAAAEDDEEESIEVVVEKSED).

This sequence belongs to the universal ribosomal protein uS2 family.

In Lactobacillus johnsonii (strain CNCM I-12250 / La1 / NCC 533), this protein is Small ribosomal subunit protein uS2.